The chain runs to 255 residues: Acetyl-coenzyme A carboxylase carboxyl transferase subunit alpha (255 aa).

One can recognise a CoA carboxyltransferase C-terminal domain in the interval 1–235 (MNIAKIVREA…KKELQTELAR (235 aa)).

This sequence belongs to the AccA family. As to quaternary structure, acetyl-CoA carboxylase is a heterohexamer composed of biotin carboxyl carrier protein (AccB), biotin carboxylase (AccC) and two subunits each of ACCase subunit alpha (AccA) and ACCase subunit beta (AccD).

It localises to the cytoplasm. It carries out the reaction N(6)-carboxybiotinyl-L-lysyl-[protein] + acetyl-CoA = N(6)-biotinyl-L-lysyl-[protein] + malonyl-CoA. The protein operates within lipid metabolism; malonyl-CoA biosynthesis; malonyl-CoA from acetyl-CoA: step 1/1. Functionally, component of the acetyl coenzyme A carboxylase (ACC) complex. First, biotin carboxylase catalyzes the carboxylation of biotin on its carrier protein (BCCP) and then the CO(2) group is transferred by the carboxyltransferase to acetyl-CoA to form malonyl-CoA. The protein is Acetyl-coenzyme A carboxylase carboxyl transferase subunit alpha of Streptococcus pneumoniae serotype 2 (strain D39 / NCTC 7466).